The sequence spans 334 residues: Tryptophan--tRNA ligase (334 aa).

ATP contacts are provided by residues 11–13 (QPS) and 19–20 (GN). Positions 12–20 (PSGELTIGN) match the 'HIGH' region motif. Asp-135 serves as a coordination point for L-tryptophan. ATP is bound by residues 147-149 (GED), Val-186, and 195-199 (KMSKS). Positions 195 to 199 (KMSKS) match the 'KMSKS' region motif.

The protein belongs to the class-I aminoacyl-tRNA synthetase family. As to quaternary structure, homodimer.

Its subcellular location is the cytoplasm. It catalyses the reaction tRNA(Trp) + L-tryptophan + ATP = L-tryptophyl-tRNA(Trp) + AMP + diphosphate + H(+). Its function is as follows. Catalyzes the attachment of tryptophan to tRNA(Trp). Amino acylates tRNA(Trp) with both L- and D-tryptophan, although D-tryptophan is a poor substrate. This Escherichia coli (strain K12) protein is Tryptophan--tRNA ligase.